We begin with the raw amino-acid sequence, 166 residues long: Alanine racemase (166 aa).

Residue tyrosine 62 is the Proton acceptor; specific for L-alanine of the active site. Position 110 (methionine 110) interacts with substrate.

The protein belongs to the alanine racemase family. Requires pyridoxal 5'-phosphate as cofactor.

The catalysed reaction is L-alanine = D-alanine. Its pathway is amino-acid biosynthesis; D-alanine biosynthesis; D-alanine from L-alanine: step 1/1. Its function is as follows. Catalyzes the interconversion of L-alanine and D-alanine. May also act on other amino acids. In Piscirickettsia salmonis, this protein is Alanine racemase (alr).